The chain runs to 318 residues: Strigolactone esterase D14 (318 aa).

Pro residues predominate over residues 1–11; that stretch reads MLRSTHPPPSS. The tract at residues 1–48 is disordered; sequence MLRSTHPPPSSPSSSSSGGGGGGGSSASSSSEKTMVGGGGGGGGGSGS. A compositionally biased stretch (gly residues) spans 36–47; the sequence is VGGGGGGGGGSG. S147 functions as the Nucleophile in the catalytic mechanism. Residues S147 and C241 each contribute to the substrate site. Residues D268 and H297 contribute to the active site. Substrate is bound at residue H297.

It belongs to the AB hydrolase superfamily. In terms of assembly, interacts with D53. The interaction between D53 and D14 is enhanced in the presence of strigolactones. The interaction with D53 occurs in the presence of (2'R) stereoisomers of strigolactones, but not (2'S) stereoisomers. Interacts with SLR1 in a strigolactone-dependent manner. Interacts with D3 in a strigolactone-dependent manner. Expressed in the parenchyma cells of the root stele and lateral roots, vascular tissues of vein and leaf sheath, ligule base, auricle base and stem base.

The protein resides in the cytoplasm. Its subcellular location is the nucleus. Involved in strigolactone (SL) signaling pathway. May function downstream of SL synthesis, as a component of hormone signaling or as an enzyme that participates in the conversion of SL to the bioactive form. Strigolactones are hormones that inhibit tillering and shoot branching through the MAX-dependent pathway, contribute to the regulation of shoot architectural response to phosphate-limiting conditions and function as rhizosphere signal that stimulates hyphal branching of arbuscular mycorrhizal fungi and trigger seed germination of root parasitic weeds. Strigolactone-dependent association of D14 with D3 and D53 (a repressor of SL signaling) triggers D53 ubiquitination and degradation. Hydrolyzes the butenolide ring of SLs. A reaction product D-OH is trapped in the cavity of D14, inducing the interaction with SLR1, and probably with other proteins such as D3 and D53. Contributes to the negative regulation of gibberellin signaling. This is Strigolactone esterase D14 from Oryza sativa subsp. japonica (Rice).